The primary structure comprises 110 residues: MALWMRFLPLLALLVLWEPKPAQAFVKQHLCGPHLVEALYLVCGERGFFYTPKSRREVEDPQVPQLELGGGPEAGDLQTLALEVARQKRGIVDQCCTSICSLYQLENYCN.

The signal sequence occupies residues Met-1 to Ala-24. Cystine bridges form between Cys-31-Cys-96, Cys-43-Cys-109, and Cys-95-Cys-100. The propeptide at Glu-57–Gln-87 is c peptide.

It belongs to the insulin family. As to quaternary structure, heterodimer of a B chain and an A chain linked by two disulfide bonds.

It localises to the secreted. Insulin decreases blood glucose concentration. It increases cell permeability to monosaccharides, amino acids and fatty acids. It accelerates glycolysis, the pentose phosphate cycle, and glycogen synthesis in liver. This chain is Insulin-1 (Ins1), found in Rattus norvegicus (Rat).